The sequence spans 367 residues: Germination protease (367 aa).

The propeptide occupies Met1–Asp15.

It belongs to the peptidase A25 family. As to quaternary structure, homotetramer. In terms of processing, autoproteolytically processed. The inactive tetrameric zymogen termed p46 autoprocesses to a smaller form termed p41, which is active only during spore germination.

The enzyme catalyses Endopeptidase action with P4 Glu or Asp, P1 preferably Glu &gt; Asp, P1' hydrophobic and P2' Ala.. In terms of biological role, initiates the rapid degradation of small, acid-soluble proteins during spore germination. This is Germination protease from Bacillus cereus (strain G9842).